The following is a 333-amino-acid chain: Fatty acid hydroxylase domain-containing protein 2 (333 aa).

The next 6 helical transmembrane spans lie at 29 to 49, 77 to 97, 134 to 154, 168 to 188, 215 to 235, and 237 to 257; these read FILGSGLLSFVAFWNSVTWHL, ILFFIGAIQVPCLFFWSFNGL, TVLFNQCMISFPMVVFLYPFL, FHWFLLELAIFTLIEEVLFYY, VISLYAHPIEHAVSNMLPVIV, and PLVMGSHLSSITMWFSLALII. Positions 176–299 constitute a Fatty acid hydroxylase domain; it reads AIFTLIEEVL…LGVLDHLHGT (124 aa).

It belongs to the sterol desaturase family. Down-regulated in primary acute myeloid leukemia (AML) patients.

The protein localises to the cytoplasm. It is found in the membrane. Its function is as follows. Promotes megakaryocyte differentiation by enhancing ERK phosphorylation and up-regulating RUNX1 expression. The protein is Fatty acid hydroxylase domain-containing protein 2 (FAXDC2) of Homo sapiens (Human).